A 103-amino-acid polypeptide reads, in one-letter code: L-rhamnose-binding lectin ELEL-1 (103 aa).

The SUEL-type lectin domain occupies 13 to 102; it reads VCEGSSLTIS…KYLELSYDCS (90 aa). 4 disulfides stabilise this stretch: cysteine 14–cysteine 45, cysteine 23–cysteine 101, cysteine 56–cysteine 88, and cysteine 69–cysteine 75.

As to quaternary structure, homodimer; disulfide-linked. Post-translationally, not glycosylated.

Its function is as follows. Rhamnose-binding lectin. Also binds alpha-D-melibiose, alpha-D-lactose, beta-D-lactose, methyl-alpha-D-galactopyranoside, methyl-beta-D--galactopyranoside and D-galactose but not D-arabinose, L-fucose, D-glucose, D-mannose, D-maltose, D-sucrose, N-acetyl-D-galactosamine, N-acetyl-D-glucosamine, N-acetyl-D-mannosamine-D-xylose or by glycoproteins orosomucoid, thyroglobulin, ovomucoid and porcine stomach mucin. Shows cation-independent hemagglutinating activity against rabbit and human erythrocytes. Agglutinates cells of Gram-positive bacterial species S.aureus but not those of Gram-negative E.coli. The protein is L-rhamnose-binding lectin ELEL-1 of Echinometra lucunter (Rock-boring urchin).